The chain runs to 580 residues: Cis-3-hydroxy-L-proline dehydratase (580 aa).

Serine 66 (proton acceptor) is an active-site residue.

It belongs to the AcnX family. Monomer. It depends on Fe(3+) as a cofactor.

It carries out the reaction cis-3-hydroxy-L-proline = 1-pyrroline-2-carboxylate + H2O. Its activity is regulated as follows. Inhibited by Zn(2+), Cd(2+) and Hg(2+), but not by Co(2+), Ni(2+), Mn(2+), Sr(2+), Mg(2+), or Fe(3+). Inhibited by pyrrole-2-carboxylate and its derivative 2-thiophenecarboxylate, but not by trans-aconitate, fluorocitrate and oxalomalate, which are typical inhibitors of the aconitase enzymes. Functionally, catalyzes the dehydration of cis-3-hydroxy-L-proline (c3LHyp) to Delta(1)-pyrroline-2-carboxylate (Pyr2C). Also has activity with (2S,3S,4R)-3,4-dihydroxyproline as substrate, albeit at about 300-fold lower rate. No activity with L-proline, trans-4-hydroxy-L-proline (t4LHyp), cis-4-hydroxy-L-proline (c4LHyp), trans-3-hydroxy-L-proline (t3LHyp), D-proline, cis-4-hydroxy-D-proline (c4DHyp), trans-4-hydroxy-D-proline (t4DHyp) or L-serine as substrates. No hydro-lyase activity with citrate or cis-acotinate. Does not catalyze 2-epimerization of c3LHyp to trans-3-hydroxy-D-proline (t3DHyp). Involved in a degradation pathway that converts c3LHyp to L-proline, which would allow P.aeruginosa to grow on c3LHyp as a sole carbon source. The sequence is that of Cis-3-hydroxy-L-proline dehydratase from Pseudomonas aeruginosa (strain ATCC 15692 / DSM 22644 / CIP 104116 / JCM 14847 / LMG 12228 / 1C / PRS 101 / PAO1).